The primary structure comprises 611 residues: MTIKLLSESTINRIAAGEVIERPASVVKELVENAVDAGSTKIDIILERAGKNLIIISDDGVGMTDKELEIAVERHTTSKLDETDFLNIHTFGFRGEALPSIAAISKMLITSKKRDNQKAFQIKLIGGDEKQIAPAIHNEGTKIEIRDLFFATPARLKFLRTDKTELAATVDVVKKIALAHPEISFSLTHDGKTLLKLKGQNKDAENNLKQRIIDVIGEDFIKNASYIDFKSPDFSIYGYTSIPTYNRASSEDQFLFINNRPVKDKLLQVALRVAYQDYMPRDRYPLCAIFLQIDPQLVDVNVHPAKAEVRFHDPNYVRNLLIDSIKNALSNKSHIASTTIASSAIELFKNPFVNKEPAISKPLNVNSKPSEYRPATSPTVPKYTPNNSCQKLIDTLPHARIEQEVEQRIQNEPQKSSQYRLGAAKAQLHTTYVISQTEDSIVITDQHAAHERLGYEKIKNYIKNEELIKQRLLIPEIVELPDEKRADILYENKDKLSKLGLSLEKFGEKSIIVTEIPNILGDINVQKLIQDLADHLAECGENIALTELIEHVTETYACHYSIRAGRKLSADEMNALLRQMENTPFSGQCNHGRPTYIELKLKDIERLFGRK.

This sequence belongs to the DNA mismatch repair MutL/HexB family.

Its function is as follows. This protein is involved in the repair of mismatches in DNA. It is required for dam-dependent methyl-directed DNA mismatch repair. May act as a 'molecular matchmaker', a protein that promotes the formation of a stable complex between two or more DNA-binding proteins in an ATP-dependent manner without itself being part of a final effector complex. This chain is DNA mismatch repair protein MutL, found in Rickettsia bellii (strain RML369-C).